The chain runs to 114 residues: Probable 4-amino-4-deoxy-L-arabinose-phosphoundecaprenol flippase subunit ArnE (114 aa).

3 helical membrane passes run 38–58 (LTLRWLAIAVVSLGLGMLLWL), 64–84 (LPLSVAYPMLSFNFVLVTLAA), and 94–114 (LRHWLGVAAIIFGILLMSWHL). The region spanning 43 to 112 (LAIAVVSLGL…IIFGILLMSW (70 aa)) is the EamA domain.

It belongs to the ArnE family. In terms of assembly, heterodimer of ArnE and ArnF.

It localises to the cell inner membrane. It functions in the pathway bacterial outer membrane biogenesis; lipopolysaccharide biosynthesis. Functionally, translocates 4-amino-4-deoxy-L-arabinose-phosphoundecaprenol (alpha-L-Ara4N-phosphoundecaprenol) from the cytoplasmic to the periplasmic side of the inner membrane. The sequence is that of Probable 4-amino-4-deoxy-L-arabinose-phosphoundecaprenol flippase subunit ArnE from Yersinia pseudotuberculosis serotype O:1b (strain IP 31758).